The following is a 302-amino-acid chain: Aspartate carbamoyltransferase catalytic subunit (302 aa).

Carbamoyl phosphate contacts are provided by Arg-53 and Thr-54. Lys-82 is a binding site for L-aspartate. Arg-103, His-131, and Gln-134 together coordinate carbamoyl phosphate. 2 residues coordinate L-aspartate: Arg-164 and Arg-223. Residues Leu-260 and Pro-261 each contribute to the carbamoyl phosphate site.

The protein belongs to the aspartate/ornithine carbamoyltransferase superfamily. ATCase family. Heterooligomer of catalytic and regulatory chains.

It carries out the reaction carbamoyl phosphate + L-aspartate = N-carbamoyl-L-aspartate + phosphate + H(+). It participates in pyrimidine metabolism; UMP biosynthesis via de novo pathway; (S)-dihydroorotate from bicarbonate: step 2/3. In terms of biological role, catalyzes the condensation of carbamoyl phosphate and aspartate to form carbamoyl aspartate and inorganic phosphate, the committed step in the de novo pyrimidine nucleotide biosynthesis pathway. This Methanococcus maripaludis (strain C6 / ATCC BAA-1332) protein is Aspartate carbamoyltransferase catalytic subunit.